The chain runs to 397 residues: Succinate--CoA ligase [ADP-forming] subunit beta (397 aa).

The ATP-grasp domain occupies 9–254 (KALLAQYGAP…ETEEDPKELA (246 aa)). ATP-binding positions include Lys46, 53 to 55 (GRG), Glu109, Ser112, and Glu117. 2 residues coordinate Mg(2+): Asn209 and Asp223. Residues Asn274 and 331 to 333 (GIM) contribute to the substrate site.

This sequence belongs to the succinate/malate CoA ligase beta subunit family. Heterotetramer of two alpha and two beta subunits. Requires Mg(2+) as cofactor.

The enzyme catalyses succinate + ATP + CoA = succinyl-CoA + ADP + phosphate. The catalysed reaction is GTP + succinate + CoA = succinyl-CoA + GDP + phosphate. It functions in the pathway carbohydrate metabolism; tricarboxylic acid cycle; succinate from succinyl-CoA (ligase route): step 1/1. Functionally, succinyl-CoA synthetase functions in the citric acid cycle (TCA), coupling the hydrolysis of succinyl-CoA to the synthesis of either ATP or GTP and thus represents the only step of substrate-level phosphorylation in the TCA. The beta subunit provides nucleotide specificity of the enzyme and binds the substrate succinate, while the binding sites for coenzyme A and phosphate are found in the alpha subunit. The sequence is that of Succinate--CoA ligase [ADP-forming] subunit beta from Jannaschia sp. (strain CCS1).